The primary structure comprises 793 residues: RNA-binding protein spenito (793 aa).

Disordered stretches follow at residues 1–93 and 243–296; these read MSSH…PPAE and HHDY…KKDK. Residues 25-42 show a composition bias toward low complexity; sequence SRSPGPASRSSLSRNSRS. The segment covering 257–268 has biased composition (basic residues); it reads RGGHPHHLHGHA. Residues 285-296 show a composition bias toward basic and acidic residues; sequence APYEKPESKKDK. 2 consecutive RRM domains span residues 314-391 and 395-469; these read RTLF…YGKV and TRMW…FAEL. Residues 507–623 are disordered; sequence YAPRGGYSPY…RNDALASAST (117 aa). Basic residues predominate over residues 526 to 536; it reads GGYRGRGRGMY. The span at 566 to 593 shows a compositional bias: basic and acidic residues; it reads DEWRRPPGESYDRGARSSSREPGVERSR. In terms of domain architecture, SPOC spans 624–791; that stretch reads VPDVARKCST…HLVIVVVRGG (168 aa).

The protein belongs to the RRM Spen family. As to quaternary structure, component of the WMM complex, a N6-methyltransferase complex composed of a catalytic subcomplex, named MAC, and of an associated subcomplex, named MACOM. The MAC subcomplex is composed of Ime4/Mettl3 and Mettl14. The MACOM subcomplex is composed of fl(2)d, Flacc/Xio, Hakai, vir, and, in some cases of nito. Interacts with Sxl. Interacts with Hipk; leading to phosphorylation. Phosphorylated by Hipk at Ser-23, Ser-25 and/or Ser-27; the precise position if phosphorylation sites is unknown. Widely expressed. Shows some enrichment in the central nervous system.

It localises to the nucleus. Functionally, RNA-binding protein that acts as an associated component of the WMM complex, a complex that mediates N6-methyladenosine (m6A) methylation of mRNAs. M6a modification plays a role in the efficiency of mRNA splicing and is required for sex determination. In the WMM complex, may act by binding target RNAs and recruiting the WMM complex. Required for sex determination and dosage compensation via Sxl alternative splicing: m6A methylation acts as a key regulator of Sxl pre-mRNA and promotes female-specific alternative splicing of Sxl, which determines female physiognomy. M6A methylation is also required for neuronal functions. Acts as a positive regulator of canonical Wg signaling during wing disk and eye development. The polypeptide is RNA-binding protein spenito (Drosophila melanogaster (Fruit fly)).